The following is a 153-amino-acid chain: UPAR/Ly6 domain-containing protein cold (153 aa).

An N-terminal signal peptide occupies residues 1–25; sequence MKSWEIAVVLVAAVYLCSQVNFVAG. Residues 26-130 lie on the Extracellular side of the membrane; sequence LECYVCSNQT…FVISGAPSRQ (105 aa). Cystine bridges form between C28–C55, C31–C41, C48–C81, C87–C112, C99–C109, and C113–C118. A glycan (N-linked (GlcNAc...) asparagine) is linked at N33. S124 carries GPI-anchor amidated serine lipidation. The propeptide at 125–153 is removed in mature form; sequence GAPSRQGYGVCLTLLTALLGLGSWLIPRS. The helical transmembrane segment at 131–151 threads the bilayer; sequence GYGVCLTLLTALLGLGSWLIP. Residues 152–153 lie on the Cytoplasmic side of the membrane; the sequence is RS.

This sequence belongs to the snake toxin-like superfamily. GPI-anchored. In terms of tissue distribution, expressed in all tissues that form septate junctions, including hindgut, trachea, epidermis and dorsal pouch. Expressed in subperineurial glial cells that form the hemolymph-brain barrier of the central nervous system.

Its subcellular location is the endosome membrane. The protein localises to the endoplasmic reticulum membrane. It localises to the cell membrane. It is found in the cell junction. The protein resides in the septate junction. Required for septate junction assembly, possibly by organizing the preassembly and transport of septate junction proteins such as dlg1/disks large 1 and Nrx-IV/Neurexin-IV. Involved in paracellular barrier functions of trachea, hindgut and salivary gland mediated by epithelial cell septate junctions. Involved in paracellular barrier functions of the hemolymph-brain barrier (insect blood-brain barrier) mediated by glial cell septate junctions. Required for maintenance of septate junctions in imaginal disk epithelial cells. Involved in the epithelial cell wound-healing response. Directly or indirectly mediates cell-cell adhesion during septate junction formation. This chain is UPAR/Ly6 domain-containing protein cold, found in Drosophila melanogaster (Fruit fly).